A 327-amino-acid chain; its full sequence is MALVHKLLRGTYILRKFSKPASALYPFLGIRFAEYSSSLQKPVASPGKASSQRKTEGDLQGDHQKEVALDITSSEEKPDVSFDKAIRDEAAYHFRHLKDEIVDHWRGPEGRPLREVLLEQAKVVWQFRGKEDLDKWTVTSDKTIGGRSEVFLKMGKNNQSALLYGTLSSEAPHDGESTRSGYCAMISRIPRGAFERKVSYDWSQFNTLYLRVRGDGRPWMVNIKEDTDFFQRTNQMYSYFMFTRGGPYWQEVKIPFSKFFFSNRGRIRDVQHELPLDKISSIGFTLADKVDGPFFLEIDFIGVFTDPAHTEEFAYENSPELNPRLFK.

A mitochondrion-targeting transit peptide spans 1 to 24 (MALVHKLLRGTYILRKFSKPASAL). Residues 42–63 (PVASPGKASSQRKTEGDLQGDH) are disordered. Over residues 53–63 (RKTEGDLQGDH) the composition is skewed to basic and acidic residues. Position 318 is a phosphoserine (Ser318).

The protein belongs to the CIA30 family. Part of the mitochondrial complex I assembly/MCIA complex that comprises at least the core subunits TMEM126B, NDUFAF1, ECSIT and ACAD9 and complement subunits such as COA1 and TMEM186. Interacts with ECSIT. Interacts with ACAD9. At early stages of complex I assembly, it is found in intermediate subcomplexes that contain different subunits including NDUFB6, NDUFA6, NDUFA9, NDUFS3, NDUFS7, ND1, ND2 and ND3. Interacts with TMEM70 and TMEM242.

It localises to the mitochondrion. Its subcellular location is the mitochondrion matrix. Its function is as follows. As part of the MCIA complex, involved in the assembly of the mitochondrial complex I. The protein is Complex I intermediate-associated protein 30, mitochondrial of Pongo pygmaeus (Bornean orangutan).